A 319-amino-acid chain; its full sequence is Ferrochelatase (319 aa).

Positions 194 and 275 each coordinate Fe cation.

The protein belongs to the ferrochelatase family.

It is found in the cytoplasm. It catalyses the reaction heme b + 2 H(+) = protoporphyrin IX + Fe(2+). It functions in the pathway porphyrin-containing compound metabolism; protoheme biosynthesis; protoheme from protoporphyrin-IX: step 1/1. Catalyzes the ferrous insertion into protoporphyrin IX. The sequence is that of Ferrochelatase from Vibrio vulnificus (strain CMCP6).